Reading from the N-terminus, the 317-residue chain is Melanocyte-stimulating hormone receptor (317 aa).

The Extracellular segment spans residues 1 to 37 (MAVQGSQRRLLGSLNSTPTAIPQLGLAANQTGAWCLE). Asn29 carries N-linked (GlcNAc...) asparagine glycosylation. Residues 38–63 (VSIPDGLFLSLGLVSLVENVLVVATI) traverse the membrane as a helical segment. The Cytoplasmic segment spans residues 64–72 (AKNRNLHSP). Residues 73–93 (MYCFICCLALSDLLVSGGNVL) traverse the membrane as a helical segment. Residues 94 to 118 (ETAVILLLEAGALAARAAVVQQLDN) are Extracellular-facing. A helical transmembrane segment spans residues 119–140 (VIDVITCSSMLSSLCFLGAIAV). The Cytoplasmic portion of the chain corresponds to 141 to 163 (DRYISIFYALRYHSIVTLPRARR). The chain crosses the membrane as a helical span at residues 164 to 183 (AIAAIWVASVLFSTLFIAYY). At 184–191 (DHAAVLLC) the chain is on the extracellular side. A helical transmembrane segment spans residues 192 to 211 (LVVFFLAMLVLMAVLYVHML). The Cytoplasmic segment spans residues 212–240 (ARACQHAQGIARLHKRQRPVHQGFGLKGA). A helical membrane pass occupies residues 241–266 (VTLTILLGIFFLCWGPFFLHLTLIVL). Residues 267–279 (CPQHPTCSCIFKN) lie on the Extracellular side of the membrane. A helical transmembrane segment spans residues 280-300 (FNLFLALIICNAIIDPLIYAF). The Cytoplasmic portion of the chain corresponds to 301-317 (RSQELRRTLKEVLTCSW). Cys315 is lipidated: S-palmitoyl cysteine.

The protein belongs to the G-protein coupled receptor 1 family. In terms of assembly, interacts with MGRN1, but does not undergo MGRN1-mediated ubiquitination; this interaction competes with GNAS-binding and thus inhibits agonist-induced cAMP production. Interacts with OPN3; the interaction results in a decrease in MC1R-mediated cAMP signaling and ultimately a decrease in melanin production in melanocytes.

The protein resides in the cell membrane. Its function is as follows. Receptor for MSH (alpha, beta and gamma) and ACTH. The activity of this receptor is mediated by G proteins which activate adenylate cyclase. Mediates melanogenesis, the production of eumelanin (black/brown) and phaeomelanin (red/yellow), via regulation of cAMP signaling in melanocytes. The chain is Melanocyte-stimulating hormone receptor (MC1R) from Pongo pygmaeus (Bornean orangutan).